Here is a 258-residue protein sequence, read N- to C-terminus: uncharacterized protein (258 aa).

Residues 1–19 (MRKIFLPLLLVALSPVAHS) form the signal peptide.

This is an uncharacterized protein from Escherichia coli (strain K12).